The chain runs to 188 residues: dCTP deaminase (188 aa).

DCTP is bound by residues 111-116, 135-137, Q156, Y170, and Q180; these read KSTYAR and TLE. Residue E137 is the Proton donor/acceptor of the active site.

This sequence belongs to the dCTP deaminase family. As to quaternary structure, homotrimer.

It catalyses the reaction dCTP + H2O + H(+) = dUTP + NH4(+). The protein operates within pyrimidine metabolism; dUMP biosynthesis; dUMP from dCTP (dUTP route): step 1/2. Catalyzes the deamination of dCTP to dUTP. The sequence is that of dCTP deaminase from Acidithiobacillus ferrooxidans (strain ATCC 23270 / DSM 14882 / CIP 104768 / NCIMB 8455) (Ferrobacillus ferrooxidans (strain ATCC 23270)).